Consider the following 316-residue polypeptide: MANYGDPNLKVFTLNSNKGLAYEITERIGVPMGKSSVTRFSDGEVQINIEESIRGCDVFLIQSTAAPANEHIMELLIMIDAVKRASAKTINVVIPYYGYARQDRKARAREPITAKLVANLLETAGATRVLTLDLHATQIQGFFDIPVDQLMGVPILAEFFEKKGLDDVVVVSPDHGGVVRARKLADRLKAPIAIIDKRRPKPNVAEVMNIVGHIEGKTAIIIDDIIDTAGTITLAANALVEHGAKEVYACCTHPVLSGPAIERIKNSKIKELVVMNTIELEEEKLIDKITTLSVAPLMAEAIVRVHEHSSVSLLFD.

ATP is bound by residues 42 to 44 and 101 to 102; these read DGE and RQ. Residues H135 and D174 each contribute to the Mg(2+) site. Residue K197 is part of the active site. D-ribose 5-phosphate is bound by residues R199, D223, and 227 to 231; that span reads DTAGT.

The protein belongs to the ribose-phosphate pyrophosphokinase family. Class I subfamily. In terms of assembly, homohexamer. The cofactor is Mg(2+).

Its subcellular location is the cytoplasm. It carries out the reaction D-ribose 5-phosphate + ATP = 5-phospho-alpha-D-ribose 1-diphosphate + AMP + H(+). The protein operates within metabolic intermediate biosynthesis; 5-phospho-alpha-D-ribose 1-diphosphate biosynthesis; 5-phospho-alpha-D-ribose 1-diphosphate from D-ribose 5-phosphate (route I): step 1/1. Functionally, involved in the biosynthesis of the central metabolite phospho-alpha-D-ribosyl-1-pyrophosphate (PRPP) via the transfer of pyrophosphoryl group from ATP to 1-hydroxyl of ribose-5-phosphate (Rib-5-P). The protein is Ribose-phosphate pyrophosphokinase of Halalkalibacterium halodurans (strain ATCC BAA-125 / DSM 18197 / FERM 7344 / JCM 9153 / C-125) (Bacillus halodurans).